We begin with the raw amino-acid sequence, 256 residues long: Sugar fermentation stimulation protein homolog (256 aa).

Residues 128-141 (TGSTDTSFSGTPPT) are compositionally biased toward low complexity. Residues 128-149 (TGSTDTSFSGTPPTNTEPANTK) form a disordered region.

The protein belongs to the SfsA family.

In Shewanella sediminis (strain HAW-EB3), this protein is Sugar fermentation stimulation protein homolog.